A 182-amino-acid chain; its full sequence is Glutathione-regulated potassium-efflux system ancillary protein KefG (182 aa).

It belongs to the NAD(P)H dehydrogenase (quinone) family. KefG subfamily. Interacts with KefB.

The protein resides in the cell inner membrane. The catalysed reaction is a quinone + NADH + H(+) = a quinol + NAD(+). The enzyme catalyses a quinone + NADPH + H(+) = a quinol + NADP(+). Regulatory subunit of a potassium efflux system that confers protection against electrophiles. Required for full activity of KefB. This Yersinia pseudotuberculosis serotype O:1b (strain IP 31758) protein is Glutathione-regulated potassium-efflux system ancillary protein KefG.